Consider the following 425-residue polypeptide: Enolase (425 aa).

Q162 serves as a coordination point for (2R)-2-phosphoglycerate. E204 serves as the catalytic Proton donor. Mg(2+) is bound by residues D241, E284, and D311. 4 residues coordinate (2R)-2-phosphoglycerate: K336, R365, S366, and K387. The active-site Proton acceptor is K336.

This sequence belongs to the enolase family. It depends on Mg(2+) as a cofactor.

Its subcellular location is the cytoplasm. It localises to the secreted. It is found in the cell surface. It carries out the reaction (2R)-2-phosphoglycerate = phosphoenolpyruvate + H2O. The protein operates within carbohydrate degradation; glycolysis; pyruvate from D-glyceraldehyde 3-phosphate: step 4/5. In terms of biological role, catalyzes the reversible conversion of 2-phosphoglycerate (2-PG) into phosphoenolpyruvate (PEP). It is essential for the degradation of carbohydrates via glycolysis. This is Enolase from Brucella anthropi (strain ATCC 49188 / DSM 6882 / CCUG 24695 / JCM 21032 / LMG 3331 / NBRC 15819 / NCTC 12168 / Alc 37) (Ochrobactrum anthropi).